The chain runs to 371 residues: MTTLRRTPLAAVHESLGASFTDFAGWNMPVRYSSDLAEHHAVRKNAGIFDLSHMGEIRISGPDSGAALDYALAGKLSAVAEGRAKYSLLLTDEGGVVDDLVTYHLPDGDYLVVANAANAETDLAEFTKRCARFDVTVTDESAQTALVAVQGPTAVKIVLAALQKANTTLDSDEVRDVKYYRCLTGELDGFPVLVARTGYTGEDGYELYVPAKAAAHLWQLLMDAGGEDLTPCGLACRDTLRLEAGMPLYGHELGTDIHPSQAGLGRVVNFKKEGDFVGRCALENRDTTADRVLVGLTGEGRRAGRAGYAVVNEDKTVGAITSGILSPTLGHPIAMAFVDPDVAKIGTSLSVDVRGKALNTTVVELPFYKRS.

Belongs to the GcvT family. In terms of assembly, the glycine cleavage system is composed of four proteins: P, T, L and H.

It carries out the reaction N(6)-[(R)-S(8)-aminomethyldihydrolipoyl]-L-lysyl-[protein] + (6S)-5,6,7,8-tetrahydrofolate = N(6)-[(R)-dihydrolipoyl]-L-lysyl-[protein] + (6R)-5,10-methylene-5,6,7,8-tetrahydrofolate + NH4(+). The glycine cleavage system catalyzes the degradation of glycine. This chain is Aminomethyltransferase, found in Cutibacterium acnes (strain DSM 16379 / KPA171202) (Propionibacterium acnes).